The sequence spans 106 residues: Protein translation factor SUI1 homolog (106 aa).

It belongs to the SUI1 family.

This Methanopyrus kandleri (strain AV19 / DSM 6324 / JCM 9639 / NBRC 100938) protein is Protein translation factor SUI1 homolog.